A 489-amino-acid chain; its full sequence is Cytochrome P450 monooxygenase AMT3 (489 aa).

The chain crosses the membrane as a helical span at residues L292 to L312. Position 436 (C436) interacts with heme.

It belongs to the cytochrome P450 family. Heme is required as a cofactor.

It localises to the membrane. The protein operates within mycotoxin biosynthesis. In terms of biological role, cytochrome P450 monooxygenase; part of the gene clusters that mediate the biosynthesis of AM-toxins, host-selective toxins (HSTs) causing Alternaria blotch on apple, a worldwide distributed disease. AM-toxins are cyclic depsipeptides containing the 3 residues 2-hydroxy-isovaleric acid (2-HIV), dehydroalanine, L-alanine which are common for all 3 AM-toxins I to III. The fourth precursor is L-alpha-amino-methoxyphenyl-valeric acid (L-Amv) for AM-toxin I, L-alpha-amino-phenyl-valeric acid (L-Apv) for AM-toxin II, and L-alpha-amino-hydroxyphenyl-valeric acid (L-Ahv) for AM-toxin III. AM-toxins have two target sites for affecting susceptible apple cells; they cause invagination of the plasma membrane and electrolyte loss and chloroplast disorganization. The non-ribosomal peptide synthetase AMT1 contains 4 catalytic modules and is responsible for activation of each residue in AM-toxin. The aldo-keto reductase AMT2 catalyzes the conversion of 2-keto-isovaleric acid (2-KIV) to 2-hydroxy-isovaleric acid (2-HIV), one of the precursor residues incorporated by AMT1 during AM-toxin biosynthesis, by reduction of its ketone to an alcohol. The cytochrome P450 monooxygenase AMT3 and the thioesterase AMT4 are also important for AM-toxin production, but their exact function within the AM-toxin biosynthesis are not known yet. Up to 21 proteins (including AMT1 to AMT4) are predicted to be involved in AM-toxin biosynthesis since their expression ishighly up-regulated in AM-toxin-producing cultures. The polypeptide is Cytochrome P450 monooxygenase AMT3 (Alternaria alternata (Alternaria rot fungus)).